A 242-amino-acid chain; its full sequence is Carboxy-S-adenosyl-L-methionine synthase (242 aa).

Residues Tyr38, 63–65 (GCS), 88–89 (DN), 116–117 (DL), and Arg199 contribute to the S-adenosyl-L-methionine site.

This sequence belongs to the class I-like SAM-binding methyltransferase superfamily. Cx-SAM synthase family. Homodimer.

It catalyses the reaction prephenate + S-adenosyl-L-methionine = carboxy-S-adenosyl-L-methionine + 3-phenylpyruvate + H2O. Its function is as follows. Catalyzes the conversion of S-adenosyl-L-methionine (SAM) to carboxy-S-adenosyl-L-methionine (Cx-SAM). The protein is Carboxy-S-adenosyl-L-methionine synthase of Methylococcus capsulatus (strain ATCC 33009 / NCIMB 11132 / Bath).